The following is a 592-amino-acid chain: Membrane protein insertase YidC (592 aa).

A helical membrane pass occupies residues 7–27; that stretch reads NYFVAIALSVLILVAWQYFYV. The segment at 38 to 74 is disordered; sequence AEKAQQTQQVQPQQGGQQPAPGQALPGGAVPGESRDQ. Residues 41 to 69 are compositionally biased toward low complexity; sequence AQQTQQVQPQQGGQQPAPGQALPGGAVPG. Helical transmembrane passes span 367–387, 441–461, 486–506, and 530–550; these read LFGN…LIFF, WPIL…YITI, LFGL…WPII, and FTWM…GLVI.

Belongs to the OXA1/ALB3/YidC family. Type 1 subfamily. In terms of assembly, interacts with the Sec translocase complex via SecD. Specifically interacts with transmembrane segments of nascent integral membrane proteins during membrane integration.

It is found in the cell inner membrane. Its function is as follows. Required for the insertion and/or proper folding and/or complex formation of integral membrane proteins into the membrane. Involved in integration of membrane proteins that insert both dependently and independently of the Sec translocase complex, as well as at least some lipoproteins. Aids folding of multispanning membrane proteins. The protein is Membrane protein insertase YidC of Sinorhizobium fredii (strain NBRC 101917 / NGR234).